Consider the following 177-residue polypeptide: MKALLLTFSLSLLAALQAQAFPTTEENQDVSGTWYLKAAAWDKEIPDKKFGSVSVTPMKIKTLEGGNLQVKFTVLISGRCQEMSTVLEKTDEPGKYTAYSGKQVVYSIPSAVEDHYIFYYEGKIHRHHFQIAKLVGRNPEINQEALEDFQNAVRAGGLNPDNIFIPKQSETCPLGSN.

The first 18 residues, 1–18 (MKALLLTFSLSLLAALQA), serve as a signal peptide directing secretion. A disulfide bond links C80 and C172.

This sequence belongs to the calycin superfamily. Lipocalin family. As to quaternary structure, homodimer.

Its subcellular location is the secreted. Its function is as follows. Could play a role in taste reception. Could be necessary for the concentration and delivery of sapid molecules in the gustatory system. This is von Ebner gland protein 2 (Vegp2) from Rattus norvegicus (Rat).